The sequence spans 427 residues: Trigger factor (427 aa).

In terms of domain architecture, PPIase FKBP-type spans 163-248 (GDTVVIDFVG…IHEVKAKEVP (86 aa)).

The protein belongs to the FKBP-type PPIase family. Tig subfamily.

It is found in the cytoplasm. It catalyses the reaction [protein]-peptidylproline (omega=180) = [protein]-peptidylproline (omega=0). Functionally, involved in protein export. Acts as a chaperone by maintaining the newly synthesized protein in an open conformation. Functions as a peptidyl-prolyl cis-trans isomerase. This is Trigger factor from Streptococcus pneumoniae (strain JJA).